A 205-amino-acid polypeptide reads, in one-letter code: N-(5'-phosphoribosyl)anthranilate isomerase (205 aa).

This sequence belongs to the TrpF family.

The catalysed reaction is N-(5-phospho-beta-D-ribosyl)anthranilate = 1-(2-carboxyphenylamino)-1-deoxy-D-ribulose 5-phosphate. It participates in amino-acid biosynthesis; L-tryptophan biosynthesis; L-tryptophan from chorismate: step 3/5. The polypeptide is N-(5'-phosphoribosyl)anthranilate isomerase (Thermotoga petrophila (strain ATCC BAA-488 / DSM 13995 / JCM 10881 / RKU-1)).